A 131-amino-acid polypeptide reads, in one-letter code: Structural protein ORF131 (131 aa).

This sequence belongs to the viral ORF131/RIP family.

The protein localises to the virion. In Acidianus convivator (ATV), this protein is Structural protein ORF131.